Reading from the N-terminus, the 74-residue chain is Conotoxin Bu4 (74 aa).

The first 22 residues, 1-22 (MKLTCVVIVAVLLLTACQLIIA), serve as a signal peptide directing secretion. The propeptide occupies 23 to 45 (EDSRGTQLHRALRKATKLSVSTR). 3 disulfide bridges follow: C47–C63, C54–C66, and C62–C73.

The protein belongs to the conotoxin O1 superfamily. As to expression, expressed by the venom duct.

It is found in the secreted. In Conus bullatus (Bubble cone), this protein is Conotoxin Bu4.